The sequence spans 320 residues: SUMO-activating enzyme subunit 1B-1 (320 aa).

An N-acetylmethionine modification is found at Met-1.

The protein belongs to the ubiquitin-activating E1 family. Heterodimer of SAE1A or SAE1B and SAE2. The complex binds SUMO proteins via SAE2.

It localises to the nucleus. It participates in protein modification; protein sumoylation. Its function is as follows. The dimeric enzyme acts as an E1 ligase for SUMO1 and SUMO2. It mediates ATP-dependent activation of SUMO proteins and formation of a thioester with a conserved cysteine residue on SAE2. Functionally redundant with its paralog SAE1A. This Arabidopsis thaliana (Mouse-ear cress) protein is SUMO-activating enzyme subunit 1B-1 (SAE1B-1).